Reading from the N-terminus, the 471-residue chain is Arginine biosynthesis bifunctional protein ArgJ, mitochondrial (471 aa).

Positions 201, 230, 241, 328, 466, and 471 each coordinate substrate. The active-site Nucleophile is the Thr241.

The protein belongs to the ArgJ family. In terms of assembly, heterodimer of an alpha and a beta chain. Post-translationally, the alpha and beta chains are autoproteolytically processed from a single precursor protein within the mitochondrion.

Its subcellular location is the mitochondrion matrix. The enzyme catalyses N(2)-acetyl-L-ornithine + L-glutamate = N-acetyl-L-glutamate + L-ornithine. It carries out the reaction L-glutamate + acetyl-CoA = N-acetyl-L-glutamate + CoA + H(+). It functions in the pathway amino-acid biosynthesis; L-arginine biosynthesis; L-ornithine and N-acetyl-L-glutamate from L-glutamate and N(2)-acetyl-L-ornithine (cyclic): step 1/1. Its pathway is amino-acid biosynthesis; L-arginine biosynthesis; N(2)-acetyl-L-ornithine from L-glutamate: step 1/4. In terms of biological role, catalyzes two activities which are involved in the cyclic version of arginine biosynthesis: the synthesis of acetylglutamate from glutamate and acetyl-CoA, and of ornithine by transacetylation between acetylornithine and glutamate. In Ajellomyces capsulatus (strain NAm1 / WU24) (Darling's disease fungus), this protein is Arginine biosynthesis bifunctional protein ArgJ, mitochondrial.